We begin with the raw amino-acid sequence, 273 residues long: Hydroxyethylthiazole kinase 2 (273 aa).

Methionine 45 lines the substrate pocket. ATP contacts are provided by lysine 120 and threonine 173. Glycine 200 contributes to the substrate binding site.

This sequence belongs to the Thz kinase family. Mg(2+) serves as cofactor.

The enzyme catalyses 5-(2-hydroxyethyl)-4-methylthiazole + ATP = 4-methyl-5-(2-phosphooxyethyl)-thiazole + ADP + H(+). It functions in the pathway cofactor biosynthesis; thiamine diphosphate biosynthesis; 4-methyl-5-(2-phosphoethyl)-thiazole from 5-(2-hydroxyethyl)-4-methylthiazole: step 1/1. Functionally, catalyzes the phosphorylation of the hydroxyl group of 4-methyl-5-beta-hydroxyethylthiazole (THZ). The protein is Hydroxyethylthiazole kinase 2 of Leuconostoc mesenteroides subsp. mesenteroides (strain ATCC 8293 / DSM 20343 / BCRC 11652 / CCM 1803 / JCM 6124 / NCDO 523 / NBRC 100496 / NCIMB 8023 / NCTC 12954 / NRRL B-1118 / 37Y).